We begin with the raw amino-acid sequence, 147 residues long: uncharacterized protein (147 aa).

The span at 72-81 (ARAKPASRAP) shows a compositional bias: low complexity. Residues 72-147 (ARAKPASRAP…QGAAGRRLSP (76 aa)) are disordered.

This is an uncharacterized protein from Homo sapiens (Human).